The chain runs to 413 residues: MSEWKHLHQVDPEVAAAMDREKKRQKNNIELIASENFVSEAVMEAAGSVLTNKYAEGYPGKRYYGGCEFVDQVERLAIERAKRLFGAEHANVQPHSGANANMGVYFACLEPGDTVLGMNLAHGGHLTHGSPVNISGKYFRFVAYGVDAHTGRIDYDEVARIARETKPKLIVAGASAYPRVLDFARFRAIADEVGAMLMVDMAHIAGLVAAGLHPSPVPYAEFVTTTTHKTLRGPRGGMILCKQEWAAKVDKAIFPGLQGGPLMHIIAAKAVAFQEAMAPAFTAYQKQIAANAAALAKGLTDRGFQLVSGGTDNHLMLVDLRNKQLTGKEAEKRLDECRITVNKNAIPFDPQSPFVTSGIRIGTPAATSRGMDEAAMDQVAEAIHLCLSDGSEGAMQKAVAIVDALCARFPLYA.

(6S)-5,6,7,8-tetrahydrofolate is bound by residues L120 and 124 to 126 (GHL). The residue at position 229 (K229) is an N6-(pyridoxal phosphate)lysine. 352–354 (SPF) serves as a coordination point for (6S)-5,6,7,8-tetrahydrofolate.

This sequence belongs to the SHMT family. Homodimer. It depends on pyridoxal 5'-phosphate as a cofactor.

The protein localises to the cytoplasm. The catalysed reaction is (6R)-5,10-methylene-5,6,7,8-tetrahydrofolate + glycine + H2O = (6S)-5,6,7,8-tetrahydrofolate + L-serine. The protein operates within one-carbon metabolism; tetrahydrofolate interconversion. It participates in amino-acid biosynthesis; glycine biosynthesis; glycine from L-serine: step 1/1. Catalyzes the reversible interconversion of serine and glycine with tetrahydrofolate (THF) serving as the one-carbon carrier. This reaction serves as the major source of one-carbon groups required for the biosynthesis of purines, thymidylate, methionine, and other important biomolecules. Also exhibits THF-independent aldolase activity toward beta-hydroxyamino acids, producing glycine and aldehydes, via a retro-aldol mechanism. The polypeptide is Serine hydroxymethyltransferase (Heliobacterium modesticaldum (strain ATCC 51547 / Ice1)).